The chain runs to 147 residues: Allograft inflammatory factor 1 (147 aa).

The residue at position 2 (Ser-2) is an N-acetylserine. An N6-acetyllysine modification is found at Lys-11. Residue Ser-39 is modified to Phosphoserine. EF-hand domains follow at residues 45–80 (SKLE…LGVP) and 81–115 (KTHL…GKRS). Residues Asp-58, Asn-60, Asn-62, Asp-64, Thr-100, and Asp-105 each contribute to the Ca(2+) site. Residues 128–147 (AREKEKPTGPPAKKAISELP) form a disordered region.

Homodimer (Potential). Monomer. Interacts with LCP1. Post-translationally, phosphorylated on serine residues.

The protein resides in the cytoplasm. Its subcellular location is the cytoskeleton. It is found in the cell projection. It localises to the ruffle membrane. The protein localises to the phagocytic cup. In terms of biological role, actin-binding protein that enhances membrane ruffling and RAC activation. Enhances the actin-bundling activity of LCP1. Binds calcium. Plays a role in RAC signaling and in phagocytosis. May play a role in macrophage activation and function. Promotes the proliferation of vascular smooth muscle cells and of T-lymphocytes. Enhances lymphocyte migration. Plays a role in vascular inflammation. The polypeptide is Allograft inflammatory factor 1 (AIF1) (Macaca mulatta (Rhesus macaque)).